The sequence spans 147 residues: Probable flagellum biosynthesis repressor protein FlbT (147 aa).

It belongs to the FlbT family.

Its function is as follows. Has a post-transcriptional repressor function in flagellum biogenesis. Associates with the 5'-UTR of fljK mRNA and promotes its degradation. This is Probable flagellum biosynthesis repressor protein FlbT from Mesorhizobium japonicum (strain LMG 29417 / CECT 9101 / MAFF 303099) (Mesorhizobium loti (strain MAFF 303099)).